Here is a 608-residue protein sequence, read N- to C-terminus: Histone-arginine methyltransferase CARM1 (608 aa).

Residues 28–139 (ATVSVFPGAR…GHTLERSVFS (112 aa)) are interaction with C9orf72. The SAM-dependent MTase PRMT-type domain occupies 147-454 (AVQYFQFYGY…KRQSYDISIV (308 aa)). 4 residues coordinate S-adenosyl-L-methionine: Gln-160, Arg-169, Gly-193, and Glu-215. Ser-217 carries the post-translational modification Phosphoserine. Residue Lys-228 forms a Glycyl lysine isopeptide (Lys-Gly) (interchain with G-Cter in ubiquitin) linkage. 2 residues coordinate S-adenosyl-L-methionine: Glu-244 and Ser-272. Positions 347-380 (RILMAKSVKYTVNFLEAKEGDLHRIEIPFKFHML) are required for nuclear translocation. Positions 500–608 (TGSTYNLSSG…IPTNTMHYGS (109 aa)) are transactivation domain. Arg-551 bears the Dimethylated arginine mark.

The protein belongs to the class I-like SAM-binding methyltransferase superfamily. Protein arginine N-methyltransferase family. As to quaternary structure, homodimer. Interacts with NR1H4. Interacts with SNRPC. Interacts with the C-terminus of NCOA2/GRIP1, NCO3/ACTR and NCOA1/SRC1. Part of a complex consisting of CARM1, EP300/P300 and NCOA2/GRIP1. Interacts with FLII, TP53, myogenic factor MEF2, EP300/P300, TRIM24, CREBBP and CTNNB1. Interacts with RELA. Identified in a complex containing CARM1, TRIM24 and NCOA2/GRIP1. Interacts with NCOA3/SRC3. Interacts with SKP2. Interacts (via PH domain-like fold) with C9orf72. Interacts with PARP1; promoting PARP1 recruimtent to replication forks. In terms of processing, phosphorylation at Ser-217 is strongly increased during mitosis, and decreases rapidly to a very low, basal level after entry into the G1 phase of the cell cycle. Phosphorylation at Ser-217 interferes with S-adenosyl-L-methionine binding and strongly reduces methyltransferase activity. Phosphorylation at Ser-217 may promote cytosolic location. Auto-methylated on Arg-551. Methylation enhances transcription coactivator activity. Methylation is required for its role in the regulation of pre-mRNA alternative splicing. Post-translationally, ubiquitinated by E3 ubiquitin-protein ligase complex containing FBXO9 at Lys-228; leading to proteasomal degradation. In terms of tissue distribution, ubiquitously expressed. Within the brain, present in proliferating cells from lateral ventricular zone and dentate gyrus (at protein level).

Its subcellular location is the nucleus. It localises to the cytoplasm. The protein resides in the chromosome. It carries out the reaction L-arginyl-[protein] + 2 S-adenosyl-L-methionine = N(omega),N(omega)-dimethyl-L-arginyl-[protein] + 2 S-adenosyl-L-homocysteine + 2 H(+). Methylation of H3R17 (H3R17me) by CARM1 is stimulated by preacetylation of H3 'Lys-18' (H3K18ac) H3 'Lys-23' (H3K23ac) by EP300 and blocked by citrullination of H3 'Arg-17' (H3R17ci) by PADI4. In terms of biological role, methylates (mono- and asymmetric dimethylation) the guanidino nitrogens of arginyl residues in several proteins involved in DNA packaging, transcription regulation, pre-mRNA splicing, and mRNA stability. Recruited to promoters upon gene activation together with histone acetyltransferases from EP300/P300 and p160 families, methylates histone H3 at 'Arg-17' (H3R17me), forming mainly asymmetric dimethylarginine (H3R17me2a), leading to activation of transcription via chromatin remodeling. During nuclear hormone receptor activation and TCF7L2/TCF4 activation, acts synergically with EP300/P300 and either one of the p160 histone acetyltransferases NCOA1/SRC1, NCOA2/GRIP1 and NCOA3/ACTR or CTNNB1/beta-catenin to activate transcription. During myogenic transcriptional activation, acts together with NCOA3/ACTR as a coactivator for MEF2C. During monocyte inflammatory stimulation, acts together with EP300/P300 as a coactivator for NF-kappa-B. Acts as a coactivator for PPARG, promotes adipocyte differentiation and the accumulation of brown fat tissue. Plays a role in the regulation of pre-mRNA alternative splicing by methylation of splicing factors. Also seems to be involved in p53/TP53 transcriptional activation. Methylates EP300/P300, both at 'Arg-2142', which may loosen its interaction with NCOA2/GRIP1, and at 'Arg-580' and 'Arg-604' in the KIX domain, which impairs its interaction with CREB and inhibits CREB-dependent transcriptional activation. Also methylates arginine residues in RNA-binding proteins PABPC1, ELAVL1 and ELAV4, which may affect their mRNA-stabilizing properties and the half-life of their target mRNAs. Acts as a transcriptional coactivator of ACACA/acetyl-CoA carboxylase by enriching H3R17 methylation at its promoter, thereby positively regulating fatty acid synthesis. Independently of its methyltransferase activity, involved in replication fork progression: promotes PARP1 recruitment to replication forks, leading to poly-ADP-ribosylation of chromatin at replication forks and reduced fork speed. This is Histone-arginine methyltransferase CARM1 (Carm1) from Mus musculus (Mouse).